The primary structure comprises 370 residues: Adaptive-response sensory kinase SasA (370 aa).

A Histidine kinase domain is found at 152–365 (MVAHELRTPL…CFYLTVPVWQ (214 aa)). His-155 carries the post-translational modification Phosphohistidine; by autocatalysis.

As to quaternary structure, homooligomerizes. Interacts with KaiC. Participates in the KaiBC complex, whose core is composed of a KaiC homohexamer and 6 KaiB.

It carries out the reaction ATP + protein L-histidine = ADP + protein N-phospho-L-histidine.. Functionally, member of the two-component regulatory system SasA/RpaA involved in genome-wide circadian gene expression. One of several clock output pathways. Participates in the Kai clock protein complex, the main circadian regulator in cyanobacteria, via its interaction with KaiC. KaiC enhances the autophosphorylation activity of SasA, which then transfers its phosphate group to RpaA to activate it. In addition to its output function, recruits fold-shifted KaiB (KaiB(fs)) to KaiC to cooperatively form the KaiB(6):KaiC(6) complex (independent of SasA kinase activity). Required for robustness of the circadian rhythm of gene expression and is involved in clock output, also required for adaptation to light/dark cycles. This is Adaptive-response sensory kinase SasA from Prochlorococcus marinus (strain MIT 9313).